Here is a 191-residue protein sequence, read N- to C-terminus: dCTP deaminase (191 aa).

DCTP-binding positions include 112 to 117, 136 to 138, Gln-157, Tyr-173, and Gln-183; these read KSTYAR and TLE. Catalysis depends on Glu-138, which acts as the Proton donor/acceptor.

The protein belongs to the dCTP deaminase family. As to quaternary structure, homotrimer.

It carries out the reaction dCTP + H2O + H(+) = dUTP + NH4(+). The protein operates within pyrimidine metabolism; dUMP biosynthesis; dUMP from dCTP (dUTP route): step 1/2. In terms of biological role, catalyzes the deamination of dCTP to dUTP. The protein is dCTP deaminase of Psychrobacter sp. (strain PRwf-1).